Here is a 377-residue protein sequence, read N- to C-terminus: Alanine racemase (377 aa).

Residue K37 is the Proton acceptor; specific for D-alanine of the active site. N6-(pyridoxal phosphate)lysine is present on K37. R135 provides a ligand contact to substrate. Y271 serves as the catalytic Proton acceptor; specific for L-alanine. M319 contributes to the substrate binding site.

It belongs to the alanine racemase family. Pyridoxal 5'-phosphate is required as a cofactor.

It carries out the reaction L-alanine = D-alanine. It functions in the pathway amino-acid biosynthesis; D-alanine biosynthesis; D-alanine from L-alanine: step 1/1. Its function is as follows. Catalyzes the interconversion of L-alanine and D-alanine. May also act on other amino acids. In Helicobacter pylori (strain HPAG1), this protein is Alanine racemase (alr).